Reading from the N-terminus, the 297-residue chain is Phosphatidylglycerol--prolipoprotein diacylglyceryl transferase (297 aa).

3 helical membrane-spanning segments follow: residues 17-37 (LAVRWYGLMYLVGFIAAIVVG), 59-79 (MLFYGVLGTVLGGRLGYVLFY), and 97-117 (GGMSFHGGFLGVTLAMVLFAW). Arginine 142 provides a ligand contact to a 1,2-diacyl-sn-glycero-3-phospho-(1'-sn-glycerol). 2 helical membrane passes run 230-250 (MGAVSALFLIGYGLARFTVEF) and 257-277 (FLGLLALGLSMGQWLSLPMIV).

It belongs to the Lgt family.

It localises to the cell inner membrane. The enzyme catalyses L-cysteinyl-[prolipoprotein] + a 1,2-diacyl-sn-glycero-3-phospho-(1'-sn-glycerol) = an S-1,2-diacyl-sn-glyceryl-L-cysteinyl-[prolipoprotein] + sn-glycerol 1-phosphate + H(+). It participates in protein modification; lipoprotein biosynthesis (diacylglyceryl transfer). Functionally, catalyzes the transfer of the diacylglyceryl group from phosphatidylglycerol to the sulfhydryl group of the N-terminal cysteine of a prolipoprotein, the first step in the formation of mature lipoproteins. The protein is Phosphatidylglycerol--prolipoprotein diacylglyceryl transferase of Burkholderia multivorans (strain ATCC 17616 / 249).